A 597-amino-acid polypeptide reads, in one-letter code: Vacuolar protein sorting-associated protein 33A (597 aa).

It belongs to the STXBP/unc-18/SEC1 family. Core component of at least two putative endosomal tethering complexes, the homotypic fusion and vacuole protein sorting (HOPS) complex and the class C core vacuole/endosome tethering (CORVET) complex. Their common core is composed of the class C Vps proteins VPS11, VPS16, VPS18 and VPS33A, which in HOPS further associates with VPS39 and VPS41 and in CORVET with VPS8 and TGFBRAP1. Interacts with RAB5C, UVRAG, STX17, MON1A and MON1B. Associates with adaptor protein complex 3 (AP-3) and clathrin. Interacts with PLEKHM1. Ubiquitous.

Its subcellular location is the cytoplasmic vesicle. It localises to the late endosome membrane. The protein resides in the lysosome membrane. It is found in the early endosome. The protein localises to the autophagosome. Its subcellular location is the clathrin-coated vesicle. In terms of biological role, plays a role in vesicle-mediated protein trafficking to lysosomal compartments including the endocytic membrane transport and autophagic pathways. Believed to act as a core component of the putative HOPS and CORVET endosomal tethering complexes which are proposed to be involved in the Rab5-to-Rab7 endosome conversion probably implicating MON1A/B, and via binding SNAREs and SNARE complexes to mediate tethering and docking events during SNARE-mediated membrane fusion. The HOPS complex is proposed to be recruited to Rab7 on the late endosomal membrane and to regulate late endocytic, phagocytic and autophagic traffic towards lysosomes. The CORVET complex is proposed to function as a Rab5 effector to mediate early endosome fusion probably in specific endosome subpopulations. Required for fusion of endosomes and autophagosomes with lysosomes; the function is dependent on its association with VPS16 but not VIPAS39. The function in autophagosome-lysosome fusion implicates STX17 but not UVRAG. The polypeptide is Vacuolar protein sorting-associated protein 33A (Vps33a) (Rattus norvegicus (Rat)).